The following is a 171-amino-acid chain: Adenine phosphoribosyltransferase (171 aa).

Belongs to the purine/pyrimidine phosphoribosyltransferase family. In terms of assembly, homodimer.

It is found in the cytoplasm. It catalyses the reaction AMP + diphosphate = 5-phospho-alpha-D-ribose 1-diphosphate + adenine. The protein operates within purine metabolism; AMP biosynthesis via salvage pathway; AMP from adenine: step 1/1. Functionally, catalyzes a salvage reaction resulting in the formation of AMP, that is energically less costly than de novo synthesis. This Acetivibrio thermocellus (strain ATCC 27405 / DSM 1237 / JCM 9322 / NBRC 103400 / NCIMB 10682 / NRRL B-4536 / VPI 7372) (Clostridium thermocellum) protein is Adenine phosphoribosyltransferase.